The following is a 265-amino-acid chain: Indole-3-glycerol phosphate synthase (265 aa).

It belongs to the TrpC family.

The catalysed reaction is 1-(2-carboxyphenylamino)-1-deoxy-D-ribulose 5-phosphate + H(+) = (1S,2R)-1-C-(indol-3-yl)glycerol 3-phosphate + CO2 + H2O. Its pathway is amino-acid biosynthesis; L-tryptophan biosynthesis; L-tryptophan from chorismate: step 4/5. This Chromobacterium violaceum (strain ATCC 12472 / DSM 30191 / JCM 1249 / CCUG 213 / NBRC 12614 / NCIMB 9131 / NCTC 9757 / MK) protein is Indole-3-glycerol phosphate synthase.